Here is a 151-residue protein sequence, read N- to C-terminus: Ubiquitin-conjugating enzyme E2 W (151 aa).

A Peptide (Met-Gly) (interchain with G-Cter in ubiquitin) cross-link involves residue methionine 1. The UBC core domain occupies 3–151 (SMQKRLQKEL…TKWWYHDDTC (149 aa)). Cysteine 91 (glycyl thioester intermediate) is an active-site residue.

It belongs to the ubiquitin-conjugating enzyme family. Homodimer. Interacts with FANCL. Interacts with STUB1/CHIP. Post-translationally, autoubiquitinated at Met-1.

It is found in the nucleus. It catalyses the reaction S-ubiquitinyl-[E1 ubiquitin-activating enzyme]-L-cysteine + [E2 ubiquitin-conjugating enzyme]-L-cysteine = [E1 ubiquitin-activating enzyme]-L-cysteine + S-ubiquitinyl-[E2 ubiquitin-conjugating enzyme]-L-cysteine.. It carries out the reaction S-ubiquitinyl-[E1 ubiquitin-activating enzyme]-L-cysteine + [acceptor protein]-N-terminal-amino acid = [E1 ubiquitin-activating enzyme]-L-cysteine + N-terminal-ubiquitinyl-[acceptor protein].. The protein operates within protein modification; protein ubiquitination. Functionally, accepts ubiquitin from the E1 complex and catalyzes its covalent attachment to other proteins. Specifically monoubiquitinates the N-terminus of various substrates, including ATXN3, MAPT/TAU, POLR2H/RPB8 and STUB1/CHIP, by recognizing backbone atoms of disordered N-termini. Involved in degradation of misfolded chaperone substrates by mediating monoubiquitination of STUB1/CHIP, leading to recruitment of ATXN3 to monoubiquitinated STUB1/CHIP, and restriction of the length of ubiquitin chain attached to STUB1/CHIP substrates by ATXN3. After UV irradiation, but not after mitomycin-C (MMC) treatment, acts as a specific E2 ubiquitin-conjugating enzyme for the Fanconi anemia complex by associating with E3 ubiquitin-protein ligase FANCL and catalyzing monoubiquitination of FANCD2, a key step in the DNA damage pathway. In vitro catalyzes 'Lys-11'-linked polyubiquitination. UBE2W-catalyzed ubiquitination also occurs in the presence of inactive RING/U-box type E3s, i.e. lacking the active site cysteine residues to form thioester bonds with ubiquitin, or even in the absence of E3, albeit at a slower rate. The protein is Ubiquitin-conjugating enzyme E2 W (Ube2w) of Mus musculus (Mouse).